Reading from the N-terminus, the 142-residue chain is Large ribosomal subunit protein uL11 (142 aa).

The protein belongs to the universal ribosomal protein uL11 family. As to quaternary structure, part of the ribosomal stalk of the 50S ribosomal subunit. Interacts with L10 and the large rRNA to form the base of the stalk. L10 forms an elongated spine to which L12 dimers bind in a sequential fashion forming a multimeric L10(L12)X complex. In terms of processing, one or more lysine residues are methylated.

Its function is as follows. Forms part of the ribosomal stalk which helps the ribosome interact with GTP-bound translation factors. This Shewanella frigidimarina (strain NCIMB 400) protein is Large ribosomal subunit protein uL11.